The sequence spans 459 residues: Bifunctional protein GlmU (459 aa).

The interval Met-1–Arg-230 is pyrophosphorylase. UDP-N-acetyl-alpha-D-glucosamine contacts are provided by residues Leu-9–Gly-12, Lys-23, Gln-73, and Gly-78–Thr-79. Asp-103 is a binding site for Mg(2+). Positions 140, 155, 170, and 228 each coordinate UDP-N-acetyl-alpha-D-glucosamine. Asn-228 serves as a coordination point for Mg(2+). The tract at residues Val-231–Asn-251 is linker. Residues Gly-252 to Ser-459 are N-acetyltransferase. Positions 333 and 351 each coordinate UDP-N-acetyl-alpha-D-glucosamine. His-363 acts as the Proton acceptor in catalysis. Tyr-366 and Asn-377 together coordinate UDP-N-acetyl-alpha-D-glucosamine. Residues Asn-386–Tyr-387, Ala-423, and Arg-440 each bind acetyl-CoA.

It in the N-terminal section; belongs to the N-acetylglucosamine-1-phosphate uridyltransferase family. In the C-terminal section; belongs to the transferase hexapeptide repeat family. As to quaternary structure, homotrimer. The cofactor is Mg(2+).

The protein localises to the cytoplasm. The enzyme catalyses alpha-D-glucosamine 1-phosphate + acetyl-CoA = N-acetyl-alpha-D-glucosamine 1-phosphate + CoA + H(+). It carries out the reaction N-acetyl-alpha-D-glucosamine 1-phosphate + UTP + H(+) = UDP-N-acetyl-alpha-D-glucosamine + diphosphate. It participates in nucleotide-sugar biosynthesis; UDP-N-acetyl-alpha-D-glucosamine biosynthesis; N-acetyl-alpha-D-glucosamine 1-phosphate from alpha-D-glucosamine 6-phosphate (route II): step 2/2. It functions in the pathway nucleotide-sugar biosynthesis; UDP-N-acetyl-alpha-D-glucosamine biosynthesis; UDP-N-acetyl-alpha-D-glucosamine from N-acetyl-alpha-D-glucosamine 1-phosphate: step 1/1. Its pathway is bacterial outer membrane biogenesis; LPS lipid A biosynthesis. Functionally, catalyzes the last two sequential reactions in the de novo biosynthetic pathway for UDP-N-acetylglucosamine (UDP-GlcNAc). The C-terminal domain catalyzes the transfer of acetyl group from acetyl coenzyme A to glucosamine-1-phosphate (GlcN-1-P) to produce N-acetylglucosamine-1-phosphate (GlcNAc-1-P), which is converted into UDP-GlcNAc by the transfer of uridine 5-monophosphate (from uridine 5-triphosphate), a reaction catalyzed by the N-terminal domain. The sequence is that of Bifunctional protein GlmU from Bacillus cereus (strain AH187).